Reading from the N-terminus, the 421-residue chain is Gamma-glutamyl phosphate reductase (421 aa).

This sequence belongs to the gamma-glutamyl phosphate reductase family.

Its subcellular location is the cytoplasm. The enzyme catalyses L-glutamate 5-semialdehyde + phosphate + NADP(+) = L-glutamyl 5-phosphate + NADPH + H(+). It participates in amino-acid biosynthesis; L-proline biosynthesis; L-glutamate 5-semialdehyde from L-glutamate: step 2/2. Functionally, catalyzes the NADPH-dependent reduction of L-glutamate 5-phosphate into L-glutamate 5-semialdehyde and phosphate. The product spontaneously undergoes cyclization to form 1-pyrroline-5-carboxylate. The protein is Gamma-glutamyl phosphate reductase of Pseudomonas aeruginosa (strain ATCC 15692 / DSM 22644 / CIP 104116 / JCM 14847 / LMG 12228 / 1C / PRS 101 / PAO1).